The sequence spans 128 residues: Holo-[acyl-carrier-protein] synthase (128 aa).

Mg(2+) contacts are provided by aspartate 7 and glutamate 55.

It belongs to the P-Pant transferase superfamily. AcpS family. Mg(2+) is required as a cofactor.

The protein localises to the cytoplasm. It carries out the reaction apo-[ACP] + CoA = holo-[ACP] + adenosine 3',5'-bisphosphate + H(+). Transfers the 4'-phosphopantetheine moiety from coenzyme A to a Ser of acyl-carrier-protein. In Moorella thermoacetica (strain ATCC 39073 / JCM 9320), this protein is Holo-[acyl-carrier-protein] synthase.